The chain runs to 311 residues: Retron Ec78 reverse transcriptase (311 aa).

The Reverse transcriptase domain maps to 15-241 (DSGISAFLVT…HNRHVTGVTI (227 aa)). Mg(2+) contacts are provided by aspartate 96, aspartate 187, and aspartate 188.

Belongs to the bacterial reverse transcriptase family.

It catalyses the reaction DNA(n) + a 2'-deoxyribonucleoside 5'-triphosphate = DNA(n+1) + diphosphate. Its function is as follows. Reverse transcriptase (RT) component of antiviral defense system retron Ec78, composed of a non-coding RNA (ncRNA), this reverse transcriptase (RT), a probable ATPase and a putative HNH endonuclease. Expression of retron Ec78 confers protection against bacteriophage T5. At multiplicity of infection (MOI) of 0.02 cultures slow growth when infected with T5 but do not collapse, at MOI 2 cultures enter growth stasis. Responsible for synthesis of msDNA-Ec78 (a linear ssDNA with a 5'-terminal phosphate residue). Unlike most known msDNAs the mature product does not have an RNA component. The retron transcript serves as primer and template for the reaction, and codes for the RT. Not mutagenic when cloned in E.coli. It is thought to be synthesized as a branched RNA with a 2',5'-phosphodiester linkage to ssDNA; the linkage is cleaved endonucleolytically by ExoVII (xseA-xseB) leaving the observed mature 5'-ssDNA terminus. Overexpression of the ncRNA and RT, which leads to increased levels of msDNA, is not mutagenic in vivo. As the stem in the msDNA does not have a mismatch it probably does not bind or sequester MutS and/or MutL. The protein is Retron Ec78 reverse transcriptase of Escherichia coli.